Consider the following 588-residue polypeptide: Neopullulanase (588 aa).

Residues Asn147, Asn149, Ser153, Gly172, and Asp174 each contribute to the Ca(2+) site. His247 and Arg326 together coordinate substrate. Residue Asp328 is the Nucleophile of the active site. Residue Glu357 is the Proton donor of the active site. Substrate contacts are provided by residues 423–424, Asp468, and Arg472; that span reads HD.

It belongs to the glycosyl hydrolase 13 family. In terms of assembly, homodimer. Requires Ca(2+) as cofactor.

The enzyme catalyses Hydrolysis of pullulan to panose (6-alpha-D-glucosylmaltose).. Functionally, hydrolyzes pullulan efficiently but only a small amount of starch. Endohydrolysis of 1,4-alpha-glucosidic linkages in pullulan to form panose. Also cleaves (1-6)-alpha-glucosidic linkages to form maltotriose. This Geobacillus stearothermophilus (Bacillus stearothermophilus) protein is Neopullulanase (nplT).